We begin with the raw amino-acid sequence, 373 residues long: Phosphoserine aminotransferase (373 aa).

Arg-47 lines the L-glutamate pocket. Residues Ala-81 to Arg-82, Trp-113, Thr-164, Asp-185, and Gln-208 contribute to the pyridoxal 5'-phosphate site. Lys-209 is modified (N6-(pyridoxal phosphate)lysine). Asn-250–Thr-251 lines the pyridoxal 5'-phosphate pocket.

This sequence belongs to the class-V pyridoxal-phosphate-dependent aminotransferase family. SerC subfamily. Homodimer. Requires pyridoxal 5'-phosphate as cofactor.

The protein resides in the cytoplasm. It catalyses the reaction O-phospho-L-serine + 2-oxoglutarate = 3-phosphooxypyruvate + L-glutamate. The catalysed reaction is 4-(phosphooxy)-L-threonine + 2-oxoglutarate = (R)-3-hydroxy-2-oxo-4-phosphooxybutanoate + L-glutamate. The protein operates within amino-acid biosynthesis; L-serine biosynthesis; L-serine from 3-phospho-D-glycerate: step 2/3. Its pathway is cofactor biosynthesis; pyridoxine 5'-phosphate biosynthesis; pyridoxine 5'-phosphate from D-erythrose 4-phosphate: step 3/5. Catalyzes the reversible conversion of 3-phosphohydroxypyruvate to phosphoserine and of 3-hydroxy-2-oxo-4-phosphonooxybutanoate to phosphohydroxythreonine. This is Phosphoserine aminotransferase from Buchnera aphidicola subsp. Baizongia pistaciae (strain Bp).